A 447-amino-acid chain; its full sequence is MPSQRSSLMQPIPEETRKTPSAAAEDKRWSRPECQLWTGMLLLGTCLLYCTRVTMPVCTVAMSQDFGWNKKEAGIVLSSFFWGYCLTQVVGGHLGDRIGGEKVILLSASAWGFITVTTPLLAHLGSGHLAFVTFSRILTGLLQGVYFPALTSLLSQRVQESERSFTYSTVGAGSQVGTLVTGGIGSVLLDRCGWQSVFYFSGGLTLLWVYYVYKYLLDEKDLVLALGVLAQGLPVTRPSKVPWRQLFRKASVWAVICSQLSSACSFFILLSWLPTFFKETFPHSKGWVFNVVPWLLAIPASLFSGFISDRLISQGYRVITVRKFMQVMGLGLSSIFALCLGHTTSFLKSMIFASASIGFQTFNHSGISVNIQDLAPSCAGFLFGVANTAGALAGVVGVCLGGYLIETTGSWTCVFHLVAIVSNLGLGTFLVFGKAQRVDLVPTHEDL.

A disordered region spans residues 1-26 (MPSQRSSLMQPIPEETRKTPSAAAED). The segment covering 14 to 26 (EETRKTPSAAAED) has biased composition (basic and acidic residues). The next 11 membrane-spanning stretches (helical) occupy residues 36–58 (LWTG…MPVC), 74–94 (GIVL…GGHL), 103–123 (VILL…LLAH), 129–149 (LAFV…YFPA), 169–189 (TVGA…SVLL), 197–217 (VFYF…KYLL), 252–272 (VWAV…LLSW), 287–307 (WVFN…SGFI), 327–347 (VMGL…TSFL), 380–400 (GFLF…GVCL), and 413–433 (CVFH…LVFG).

The protein belongs to the major facilitator superfamily. Sodium/anion cotransporter family.

Its subcellular location is the cytoplasmic vesicle. It is found in the secretory vesicle. The protein localises to the chromaffin granule membrane. The protein resides in the secretory vesicle membrane. It localises to the lysosome membrane. The enzyme catalyses ATP(in) = ATP(out). The catalysed reaction is ADP(in) = ADP(out). It catalyses the reaction GTP(in) = GTP(out). Activity is chloride-dependent. In terms of biological role, voltage-gated ATP nucleotide uniporter that can also transport the purine nucleotides ADP and GTP. Uses the membrane potential as the driving force to control ATP accumulation in lysosomes and secretory vesicles. By controlling ATP storage in lysosomes, regulates ATP-dependent proteins of these organelles. Also indirectly regulates the exocytosis of ATP through its import into lysosomes in astrocytes and secretory vesicles such as adrenal chromaffin granules, mucin granules and synaptic vesicles. This is Voltage-gated purine nucleotide uniporter SLC17A9 from Rattus norvegicus (Rat).